The chain runs to 58 residues: Ribulose bisphosphate carboxylase large chain (58 aa).

The propeptide occupies 1-2 (MS). Pro-3 is subject to N-acetylproline. An N6,N6,N6-trimethyllysine modification is found at Lys-14.

It belongs to the RuBisCO large chain family. Type I subfamily. In terms of assembly, heterohexadecamer of 8 large chains and 8 small chains.

The protein resides in the plastid. The protein localises to the chloroplast. The enzyme catalyses 2 (2R)-3-phosphoglycerate + 2 H(+) = D-ribulose 1,5-bisphosphate + CO2 + H2O. It catalyses the reaction D-ribulose 1,5-bisphosphate + O2 = 2-phosphoglycolate + (2R)-3-phosphoglycerate + 2 H(+). Its function is as follows. RuBisCO catalyzes two reactions: the carboxylation of D-ribulose 1,5-bisphosphate, the primary event in carbon dioxide fixation, as well as the oxidative fragmentation of the pentose substrate in the photorespiration process. Both reactions occur simultaneously and in competition at the same active site. This Euonymus maackii (Maack's spindle tree) protein is Ribulose bisphosphate carboxylase large chain (rbcL).